Reading from the N-terminus, the 330-residue chain is Glycine betaine/proline betaine-binding periplasmic protein (330 aa).

Residues 1 to 21 form the signal peptide; the sequence is MRHSVLFATAFATLISTQTFA. Substrate contacts are provided by residues W86, H90, and 161-163; that span reads WGC. Cysteines 157 and 163 form a disulfide.

As to quaternary structure, the complex is composed of two ATP-binding proteins (ProV), two transmembrane proteins (ProW) and a solute-binding protein (ProX).

The protein localises to the periplasm. Its function is as follows. Part of the ProU ABC transporter complex involved in glycine betaine and proline betaine uptake. Binds glycine betaine and proline betaine with high affinity. The protein is Glycine betaine/proline betaine-binding periplasmic protein of Escherichia coli (strain K12).